The chain runs to 327 residues: Annexin A8-like protein 1 (327 aa).

4 Annexin repeats span residues 21-92, 93-164, 177-249, and 253-324; these read FNPD…ALMY, PPYR…CLLQ, ALAL…TVVK, and NLHS…SLVG. Ca(2+) contacts are provided by Met266, Gly268, Gly270, and Asp310.

The protein belongs to the annexin family.

This is Annexin A8-like protein 1 from Homo sapiens (Human).